The primary structure comprises 303 residues: Oxygen-dependent coproporphyrinogen-III oxidase (303 aa).

Position 93 (Ser93) interacts with substrate. 2 residues coordinate a divalent metal cation: His97 and His107. His107 serves as the catalytic Proton donor. 109–111 (NIR) contributes to the substrate binding site. The a divalent metal cation site is built by His146 and His176. The important for dimerization stretch occupies residues 241-276 (YVEFNLLLDRGTLFGIQSNGRIESILSSMPPLVKWE).

The protein belongs to the aerobic coproporphyrinogen-III oxidase family. In terms of assembly, homodimer. Requires a divalent metal cation as cofactor.

Its subcellular location is the cytoplasm. It carries out the reaction coproporphyrinogen III + O2 + 2 H(+) = protoporphyrinogen IX + 2 CO2 + 2 H2O. The protein operates within porphyrin-containing compound metabolism; protoporphyrin-IX biosynthesis; protoporphyrinogen-IX from coproporphyrinogen-III (O2 route): step 1/1. Its function is as follows. Involved in the heme biosynthesis. Catalyzes the aerobic oxidative decarboxylation of propionate groups of rings A and B of coproporphyrinogen-III to yield the vinyl groups in protoporphyrinogen-IX. The protein is Oxygen-dependent coproporphyrinogen-III oxidase of Wigglesworthia glossinidia brevipalpis.